A 726-amino-acid chain; its full sequence is Probable dipeptidyl-peptidase 5 (726 aa).

An N-terminal signal peptide occupies residues 1–19 (MAAAKWLIASLAFASSGLA). N-linked (GlcNAc...) asparagine glycosylation is found at Asn-96 and Asn-252. Positions 269 to 291 (AEPINKRNGPRTPQGIEGASSSP) are disordered. Ser-558 serves as the catalytic Charge relay system. Residue Asn-605 is glycosylated (N-linked (GlcNAc...) asparagine). Residues Asp-641 and His-673 each act as charge relay system in the active site. An N-linked (GlcNAc...) asparagine glycan is attached at Asn-699.

It belongs to the peptidase S9C family.

It is found in the secreted. In terms of biological role, extracellular dipeptidyl-peptidase which removes N-terminal dipeptides sequentially from polypeptides having unsubstituted N-termini. Contributes to pathogenicity. The protein is Probable dipeptidyl-peptidase 5 (DPP5) of Trichophyton verrucosum (strain HKI 0517).